The following is a 319-amino-acid chain: Cytochrome c biogenesis protein CcsA (319 aa).

The next 7 helical transmembrane spans lie at 9–29, 44–64, 71–91, 143–163, 225–245, 259–273, and 286–306; these read ILTH…LITL, GVIG…AYSG, LYES…FPYL, MVLG…LLVI, IISL…VWAN, TWAF…IYLH, and AIVA…VNLL.

The protein belongs to the CcmF/CycK/Ccl1/NrfE/CcsA family. In terms of assembly, may interact with Ccs1.

It is found in the plastid. It localises to the chloroplast thylakoid membrane. Functionally, required during biogenesis of c-type cytochromes (cytochrome c6 and cytochrome f) at the step of heme attachment. The polypeptide is Cytochrome c biogenesis protein CcsA (Oenothera parviflora (Small-flowered evening primrose)).